The chain runs to 409 residues: U-box domain-containing protein 28 (409 aa).

Positions 10-84 (TVPCFFKCPI…DHWSDSINRR (75 aa)) constitute a U-box domain. ARM repeat units lie at residues 178–218 (RLSN…FIAV), 219–261 (DAES…AIAS), and 263–304 (KRVK…AISS).

It carries out the reaction S-ubiquitinyl-[E2 ubiquitin-conjugating enzyme]-L-cysteine + [acceptor protein]-L-lysine = [E2 ubiquitin-conjugating enzyme]-L-cysteine + N(6)-ubiquitinyl-[acceptor protein]-L-lysine.. Its pathway is protein modification; protein ubiquitination. Its function is as follows. Functions as an E3 ubiquitin ligase. This is U-box domain-containing protein 28 (PUB28) from Arabidopsis thaliana (Mouse-ear cress).